The primary structure comprises 73 residues: Cytoplasmic envelopment protein 3 (73 aa).

Gly-2 carries the N-myristoyl glycine; by host lipid modification.

It belongs to the herpesviridae cytoplasmic envelopment protein 3 family. As to quaternary structure, interacts with cytoplasmic envelopment protein 2; this interaction is essential for the proper localization of each protein to the assembly complex and thus for the production of infectious virus. In terms of processing, myristoylation and palmitoylation (probably on one or more of the nearby cysteines at the N-terminus) enable membrane-binding and Golgi apparatus-specific targeting and are essential for efficient packaging. Post-translationally, phosphorylated. Phosphorylation does not seem to be required for recycling to the host Golgi apparatus. Packaging is selective for underphosphorylated forms.

The protein localises to the virion tegument. Its subcellular location is the virion membrane. It localises to the host cell membrane. The protein resides in the host Golgi apparatus membrane. Its function is as follows. Plays an important role in the cytoplasmic envelopment of tegument proteins and capsids during the assembly and egress processes. Also participates in viral entry at the fusion step probably by regulating the core fusion machinery. This is Cytoplasmic envelopment protein 3 (U71) from Homo sapiens (Human).